The primary structure comprises 275 residues: tRNA pseudouridine synthase A (275 aa).

Asp-60 (nucleophile) is an active-site residue. Tyr-119 serves as a coordination point for substrate.

It belongs to the tRNA pseudouridine synthase TruA family. Homodimer.

It catalyses the reaction uridine(38/39/40) in tRNA = pseudouridine(38/39/40) in tRNA. Formation of pseudouridine at positions 38, 39 and 40 in the anticodon stem and loop of transfer RNAs. The protein is tRNA pseudouridine synthase A of Synechocystis sp. (strain ATCC 27184 / PCC 6803 / Kazusa).